We begin with the raw amino-acid sequence, 167 residues long: Phospholipase A2 inhibitor alpha-like protein (167 aa).

Residues 1 to 19 form the signal peptide; sequence MQLILLSSLLLLGLSLANG. The 102-residue stretch at 62–163 folds into the C-type lectin domain; sequence GSERLYVTNK…CDEDLLVVCE (102 aa). Disulfide bonds link Cys83–Cys162 and Cys140–Cys154.

This sequence belongs to the alpha-type phospholipase A2 inhibitor family. In terms of assembly, homotrimer.

The protein resides in the secreted. Has no PLA2 inhibitory activity. This chain is Phospholipase A2 inhibitor alpha-like protein, found in Elaphe climacophora (Japanese rat snake).